A 207-amino-acid polypeptide reads, in one-letter code: Ribonuclease HII (207 aa).

An RNase H type-2 domain is found at 20–207; that stretch reads QLFAGVDEVG…KPVKRVLGIE (188 aa). A divalent metal cation contacts are provided by D26, E27, and D118.

It belongs to the RNase HII family. Mn(2+) is required as a cofactor. Requires Mg(2+) as cofactor.

It localises to the cytoplasm. It catalyses the reaction Endonucleolytic cleavage to 5'-phosphomonoester.. Endonuclease that specifically degrades the RNA of RNA-DNA hybrids. The polypeptide is Ribonuclease HII (Aliivibrio fischeri (strain ATCC 700601 / ES114) (Vibrio fischeri)).